Here is a 375-residue protein sequence, read N- to C-terminus: Probable G-protein coupled receptor 34 (375 aa).

Residues 1-54 lie on the Extracellular side of the membrane; the sequence is MTTTSVDSWLCSSHGMHFITNYSDQASQNFSGVPNVTSCPMDEKLLSTVLTTFY. 3 N-linked (GlcNAc...) asparagine glycosylation sites follow: Asn21, Asn29, and Asn35. A helical transmembrane segment spans residues 55 to 75; the sequence is SVIFLVGLVGNIIALYVFLGI. Residues 76 to 81 lie on the Cytoplasmic side of the membrane; sequence HRKRNS. The chain crosses the membrane as a helical span at residues 82-102; it reads IQIYLLNVAVADLLLIFCLPF. Residues 103–121 lie on the Extracellular side of the membrane; the sequence is RIMYHINQNKWTLGVILCK. Cys120 and Cys197 are joined by a disulfide. The chain crosses the membrane as a helical span at residues 122–142; that stretch reads VVGTLFYMNMYISIILLGFIS. The Cytoplasmic portion of the chain corresponds to 143–164; the sequence is LDRYIKINRSIQQRRAITTKQS. Residues 165 to 185 form a helical membrane-spanning segment; it reads IYVCCIVWTVALAGFLTMIIL. Residues 186-209 lie on the Extracellular side of the membrane; sequence TLKKGGHNSTMCFHYRDRHNAKGE. Residue Asn193 is glycosylated (N-linked (GlcNAc...) asparagine). Residues 210–230 traverse the membrane as a helical segment; that stretch reads AIFNFVLVVMFWLIFLLIILS. Over 231 to 262 the chain is Cytoplasmic; sequence YIKIGKNLLRISKRRSKFPNSGKYATTARNSF. The chain crosses the membrane as a helical span at residues 263-283; sequence IVLIIFTICFVPYHAFRFIYI. The Extracellular segment spans residues 284–303; it reads SSQLNVSSCYWKEIIHKTNE. N-linked (GlcNAc...) asparagine glycosylation occurs at Asn288. The chain crosses the membrane as a helical span at residues 304 to 324; that stretch reads IMLVFSSFNSCLDPVMYFLMS. Topologically, residues 325-375 are cytoplasmic; sequence SNIRKIMCQLLFRRFQSEASRSESTSEFKPGHSLHDLSVTVKMPQYSTKGN.

This sequence belongs to the G-protein coupled receptor 1 family. In terms of tissue distribution, highly expressed in glial cells such as astrocytes and microglia.

The protein localises to the cell membrane. Its function is as follows. G-protein-coupled receptor of lysophosphatidylserine (LysoPS) that plays different roles in immune response. Acts a damage-sensing receptor that triggers tissue repair upon recognition of dying neutrophils. Mechanistically, apoptotic neutrophils release lysophosphatydilserine that are recognized by type 3 innate lymphoid cells (ILC3s) via GPR34, which activates downstream PI3K-AKT and RAS-ERK signaling pathways leading to STAT3 activation and IL-22 production. Plays an important role in microglial function, controlling morphology and phagocytosis. This Mus musculus (Mouse) protein is Probable G-protein coupled receptor 34 (Gpr34).